The chain runs to 467 residues: Glutamate--tRNA ligase (467 aa).

The 'HIGH' region signature appears at 13-23 (PSPTGYLHVGG). The 'KMSKS' region signature appears at 245-249 (KLSKR). Residue K248 coordinates ATP.

The protein belongs to the class-I aminoacyl-tRNA synthetase family. Glutamate--tRNA ligase type 1 subfamily. Monomer.

The protein localises to the cytoplasm. The enzyme catalyses tRNA(Glu) + L-glutamate + ATP = L-glutamyl-tRNA(Glu) + AMP + diphosphate. Catalyzes the attachment of glutamate to tRNA(Glu) in a two-step reaction: glutamate is first activated by ATP to form Glu-AMP and then transferred to the acceptor end of tRNA(Glu). In Herminiimonas arsenicoxydans, this protein is Glutamate--tRNA ligase.